Reading from the N-terminus, the 332-residue chain is tRNA-dihydrouridine(20/20a) synthase (332 aa).

FMN-binding positions include 19–21 (PML) and glutamine 71. The active-site Proton donor is the cysteine 101. Residues lysine 140, histidine 173, 213–215 (NGG), and 235–236 (GR) contribute to the FMN site.

Belongs to the Dus family. DusA subfamily. FMN serves as cofactor.

The enzyme catalyses 5,6-dihydrouridine(20) in tRNA + NADP(+) = uridine(20) in tRNA + NADPH + H(+). The catalysed reaction is 5,6-dihydrouridine(20) in tRNA + NAD(+) = uridine(20) in tRNA + NADH + H(+). It catalyses the reaction 5,6-dihydrouridine(20a) in tRNA + NADP(+) = uridine(20a) in tRNA + NADPH + H(+). It carries out the reaction 5,6-dihydrouridine(20a) in tRNA + NAD(+) = uridine(20a) in tRNA + NADH + H(+). Functionally, catalyzes the synthesis of 5,6-dihydrouridine (D), a modified base found in the D-loop of most tRNAs, via the reduction of the C5-C6 double bond in target uridines. Specifically modifies U20 and U20a in tRNAs. This is tRNA-dihydrouridine(20/20a) synthase from Salmonella typhi.